Consider the following 440-residue polypeptide: uncharacterized protein (440 aa).

2 disordered regions span residues 49-81 (CPPA…EPSL) and 162-295 (LPKP…CASE). The segment covering 55–80 (HGHSSLRTNLNSSPPRCPQNPGTEPS) has biased composition (polar residues). Residues 249-266 (YREELSNTKSRFSEDKGS) are compositionally biased toward basic and acidic residues. Residues 274-284 (SSNSSEPGLPG) show a composition bias toward low complexity.

This sequence belongs to the tymoviridae protein p69 family.

This is an uncharacterized protein from Erysimum latent virus (ELV).